A 132-amino-acid chain; its full sequence is Small ribosomal subunit protein uS8 (132 aa).

The protein belongs to the universal ribosomal protein uS8 family. Part of the 30S ribosomal subunit. Contacts proteins S5 and S12.

Its function is as follows. One of the primary rRNA binding proteins, it binds directly to 16S rRNA central domain where it helps coordinate assembly of the platform of the 30S subunit. The protein is Small ribosomal subunit protein uS8 of Acidobacterium capsulatum (strain ATCC 51196 / DSM 11244 / BCRC 80197 / JCM 7670 / NBRC 15755 / NCIMB 13165 / 161).